The following is a 322-amino-acid chain: uncharacterized protein (322 aa).

A disordered region spans residues 269–289; sequence QDEEEEPRDERRPRRRLGKAQ.

This is an uncharacterized protein from Sinorhizobium fredii (strain NBRC 101917 / NGR234).